The chain runs to 346 residues: Small ribosomal subunit biogenesis GTPase RsgA 2 (346 aa).

The region spanning 93-248 (EEQLIAANFD…VIDTPGMREF (156 aa)) is the CP-type G domain. Residues 138–141 (TKAD) and 190–198 (GSSGVGKSS) contribute to the GTP site. Zn(2+) is bound by residues Cys-271, Cys-276, His-278, and Cys-284.

It belongs to the TRAFAC class YlqF/YawG GTPase family. RsgA subfamily. As to quaternary structure, monomer. Associates with 30S ribosomal subunit, binds 16S rRNA. Zn(2+) is required as a cofactor.

The protein resides in the cytoplasm. Its function is as follows. One of several proteins that assist in the late maturation steps of the functional core of the 30S ribosomal subunit. Helps release RbfA from mature subunits. May play a role in the assembly of ribosomal proteins into the subunit. Circularly permuted GTPase that catalyzes slow GTP hydrolysis, GTPase activity is stimulated by the 30S ribosomal subunit. This chain is Small ribosomal subunit biogenesis GTPase RsgA 2, found in Listeria monocytogenes serotype 4b (strain F2365).